The primary structure comprises 165 residues: Phosphopantetheine adenylyltransferase (165 aa).

Residue threonine 10 participates in substrate binding. Residues 10-11 (TF) and histidine 18 each bind ATP. Residues lysine 42, leucine 74, and arginine 88 each coordinate substrate. Residues 89–91 (GLR), glutamate 99, and 124–130 (NAFISSS) contribute to the ATP site.

This sequence belongs to the bacterial CoaD family. Homohexamer. Mg(2+) serves as cofactor.

The protein resides in the cytoplasm. It carries out the reaction (R)-4'-phosphopantetheine + ATP + H(+) = 3'-dephospho-CoA + diphosphate. The protein operates within cofactor biosynthesis; coenzyme A biosynthesis; CoA from (R)-pantothenate: step 4/5. In terms of biological role, reversibly transfers an adenylyl group from ATP to 4'-phosphopantetheine, yielding dephospho-CoA (dPCoA) and pyrophosphate. The sequence is that of Phosphopantetheine adenylyltransferase from Helicobacter hepaticus (strain ATCC 51449 / 3B1).